A 416-amino-acid chain; its full sequence is PRKCA-binding protein (416 aa).

One can recognise a PDZ domain in the interval 22 to 105 (KVTLQKDAQN…EVTIHYNKLQ (84 aa)). Positions 44 and 46 each coordinate Zn(2+). Thr-82 is subject to Phosphothreonine. The AH domain occupies 144–357 (LCNDGLVKRL…CYAVLQDADV (214 aa)). Residues 373 to 416 (PNQGSFTDGEEEDEEEEDGAAREVSKDACGATGPTDKGGSWCDS) form a disordered region. A compositionally biased stretch (acidic residues) spans 380-390 (DGEEEDEEEED). Residue Cys-414 is the site of S-palmitoyl cysteine; by DHHC8 attachment.

Monomer and homodimer. Interacts with CXADR. Interacts presynaptically with the glutamate receptors GRIA2, GRIA3, GRIK3, isoform 3 of GRIA4, isoform A of GRM4, GRM7 and GRM8; with NAPA and NAPB; and with BTG2. The interaction with NAPA and NAPB disrupts the interaction with GRIA2, conducting to the internalization of GRIA2. Interacts with PRKCA; with the amine transporters SLC6A2 and SLC6A3; with the channels ASIC1 and ASIC2; with the GTP-binding proteins ARF1 and ARF3; with the ephrin receptor tyrosine kinases EPHA7, EPHB1 and EPHB2; with ERBB2 and through its PDZ domain with the C-terminal tail of PRLHR. Interacts with UNC5A. Interacts (via AH domain) with NCS1/FREQ; in a calcium-dependent manner. Interacts with F-actin and associates with the ARP2/3 complex. Interacts (via PDZ domain) with ARF1 (activated); the interaction blocks Arp2/3 complex inhibition. Interacts with SORCS3. Phosphorylation at Thr-82 appears to inhibit the interaction with AMPA receptors. Phosphorylated on tyrosine residues by EPHB2 and on serine or threonine residues by PKC. In terms of processing, palmitoylation on Cys-414 is essential for long-term synaptic depression (LTD). As to expression, expressed in all tissues examined, with highest levels in brain and testes and lowest levels in lung.

It localises to the cytoplasm. The protein localises to the perinuclear region. Its subcellular location is the membrane. The protein resides in the postsynaptic density. It is found in the synapse. It localises to the synaptosome. The protein localises to the cytoskeleton. Probable adapter protein that bind to and organize the subcellular localization of a variety of membrane proteins containing some PDZ recognition sequence. Involved in the clustering of various receptors, possibly by acting at the receptor internalization level. Plays a role in synaptic plasticity by regulating the trafficking and internalization of AMPA receptors. May be regulated upon PRKCA activation. May regulate ASIC1/ASIC3 channel. Regulates actin polymerization by inhibiting the actin-nucleating activity of the Arp2/3 complex; the function is competitive with nucleation promoting factors and is linked to neuronal morphology regulation and AMPA receptor (AMPAR) endocytosis. Via interaction with the Arp2/3 complex involved in regulation of synaptic plasicity of excitatory synapses and required for spine shrinkage during long-term depression (LTD). Involved in regulation of astrocyte morphology, antagonistic to Arp2/3 complex activator WASL/N-WASP function. This Mus musculus (Mouse) protein is PRKCA-binding protein (Pick1).